A 235-amino-acid polypeptide reads, in one-letter code: 7-cyano-7-deazaguanine synthase (235 aa).

Position 11 to 21 (11 to 21 (FSGGQDSTTCV)) interacts with ATP. Residues Cys-199, Cys-214, Cys-217, and Cys-220 each contribute to the Zn(2+) site.

This sequence belongs to the QueC family. Zn(2+) is required as a cofactor.

The catalysed reaction is 7-carboxy-7-deazaguanine + NH4(+) + ATP = 7-cyano-7-deazaguanine + ADP + phosphate + H2O + H(+). The protein operates within purine metabolism; 7-cyano-7-deazaguanine biosynthesis. Functionally, catalyzes the ATP-dependent conversion of 7-carboxy-7-deazaguanine (CDG) to 7-cyano-7-deazaguanine (preQ(0)). In Janthinobacterium sp. (strain Marseille) (Minibacterium massiliensis), this protein is 7-cyano-7-deazaguanine synthase.